Consider the following 494-residue polypeptide: Cobyric acid synthase (494 aa).

Positions 252 to 444 constitute a GATase cobBQ-type domain; sequence DLNIAVIRLP…LHGLFDNGPW (193 aa). Residue Cys-333 is the Nucleophile of the active site. His-436 is a catalytic residue.

This sequence belongs to the CobB/CobQ family. CobQ subfamily.

Its pathway is cofactor biosynthesis; adenosylcobalamin biosynthesis. In terms of biological role, catalyzes amidations at positions B, D, E, and G on adenosylcobyrinic A,C-diamide. NH(2) groups are provided by glutamine, and one molecule of ATP is hydrogenolyzed for each amidation. The protein is Cobyric acid synthase of Nostoc punctiforme (strain ATCC 29133 / PCC 73102).